Here is a 78-residue protein sequence, read N- to C-terminus: DNA gyrase inhibitor YacG (78 aa).

The Zn(2+) site is built by Cys-7, Cys-10, Cys-26, and Cys-30.

This sequence belongs to the DNA gyrase inhibitor YacG family. Interacts with GyrB. It depends on Zn(2+) as a cofactor.

Functionally, inhibits all the catalytic activities of DNA gyrase by preventing its interaction with DNA. Acts by binding directly to the C-terminal domain of GyrB, which probably disrupts DNA binding by the gyrase. In Shewanella piezotolerans (strain WP3 / JCM 13877), this protein is DNA gyrase inhibitor YacG.